The sequence spans 157 residues: Transcription elongation factor GreA (157 aa).

The segment at 1 to 24 is disordered; sequence MDKFPMTPEGYHALDEELKRRQQE. Positions 12–24 are enriched in basic and acidic residues; sequence HALDEELKRRQQE. A coiled-coil region spans residues 53–73; it reads EAQSLNEGRIAELEDKLSRAE.

This sequence belongs to the GreA/GreB family.

Necessary for efficient RNA polymerase transcription elongation past template-encoded arresting sites. The arresting sites in DNA have the property of trapping a certain fraction of elongating RNA polymerases that pass through, resulting in locked ternary complexes. Cleavage of the nascent transcript by cleavage factors such as GreA or GreB allows the resumption of elongation from the new 3'terminus. GreA releases sequences of 2 to 3 nucleotides. This chain is Transcription elongation factor GreA, found in Beijerinckia indica subsp. indica (strain ATCC 9039 / DSM 1715 / NCIMB 8712).